The sequence spans 248 residues: Pyridoxine 5'-phosphate synthase (248 aa).

3-amino-2-oxopropyl phosphate is bound by residues asparagine 8 and arginine 19. Catalysis depends on histidine 44, which acts as the Proton acceptor. 1-deoxy-D-xylulose 5-phosphate is bound by residues arginine 46 and histidine 51. The active-site Proton acceptor is glutamate 76. Threonine 106 serves as a coordination point for 1-deoxy-D-xylulose 5-phosphate. Catalysis depends on histidine 200, which acts as the Proton donor. 3-amino-2-oxopropyl phosphate contacts are provided by residues aspartate 201 and 223–224 (GH).

Belongs to the PNP synthase family. As to quaternary structure, homooctamer; tetramer of dimers.

It localises to the cytoplasm. The enzyme catalyses 3-amino-2-oxopropyl phosphate + 1-deoxy-D-xylulose 5-phosphate = pyridoxine 5'-phosphate + phosphate + 2 H2O + H(+). It participates in cofactor biosynthesis; pyridoxine 5'-phosphate biosynthesis; pyridoxine 5'-phosphate from D-erythrose 4-phosphate: step 5/5. Functionally, catalyzes the complicated ring closure reaction between the two acyclic compounds 1-deoxy-D-xylulose-5-phosphate (DXP) and 3-amino-2-oxopropyl phosphate (1-amino-acetone-3-phosphate or AAP) to form pyridoxine 5'-phosphate (PNP) and inorganic phosphate. This chain is Pyridoxine 5'-phosphate synthase, found in Chelativorans sp. (strain BNC1).